Consider the following 400-residue polypeptide: S-adenosylmethionine synthase (400 aa).

136–141 (GTGSTD) lines the ATP pocket.

It belongs to the AdoMet synthase 2 family. Mg(2+) is required as a cofactor.

It carries out the reaction L-methionine + ATP + H2O = S-adenosyl-L-methionine + phosphate + diphosphate. Its pathway is amino-acid biosynthesis; S-adenosyl-L-methionine biosynthesis; S-adenosyl-L-methionine from L-methionine: step 1/1. Catalyzes the formation of S-adenosylmethionine from methionine and ATP. The polypeptide is S-adenosylmethionine synthase (Methanoregula boonei (strain DSM 21154 / JCM 14090 / 6A8)).